The primary structure comprises 251 residues: MYLRAVHAEAQISILQQLIRDNPLGILTTAIKSPLYPLIQSSHIPFVLDAPETSDGSLSNGVLRGHMAKQNPQAKALIEALTAQQEQGNTSLELSDEVLVLFNGPHHHYVTPKFYTETKPATGKVVPTWNYAAAQAYGKIRIYCDSKSEETMTFLQKQIEELSHQSETSIMKYSSPWQVSDAPVSYVELLKKNIIGIEITIDRLQGKFKMSQEMGQGDRDGVISGFENLGTDAGKCIANIVRERGEMKDKK.

This sequence belongs to the PaiB family.

This is an uncharacterized protein from Emericella nidulans (strain FGSC A4 / ATCC 38163 / CBS 112.46 / NRRL 194 / M139) (Aspergillus nidulans).